The primary structure comprises 366 residues: tRNA-queuosine alpha-mannosyltransferase (366 aa).

It belongs to the glycosyltransferase group 1 family. Glycosyltransferase 4 subfamily.

The protein localises to the cytoplasm. It is found in the nucleus. It carries out the reaction queuosine(34) in tRNA(Asp) + GDP-alpha-D-mannose = O-4''-alpha-D-mannosylqueuosine(34) in tRNA(Asp) + GDP + H(+). Its function is as follows. Glycosyltransferase that specifically catalyzes mannosylation of cytoplasmic tRNA(Asp) modified with queuosine at position 34 (queuosine(34)). Mannosylates the cyclopentene moiety of queuosine(34) in tRNA(Asp) to form mannosyl-queuosine(34). Mannosylation of queuosine(34) in tRNA(Asp) is required to slow-down elongation at cognate codons, GAC and GAU, thereby regulating protein translation. This chain is tRNA-queuosine alpha-mannosyltransferase (GTDC1), found in Bos taurus (Bovine).